A 179-amino-acid chain; its full sequence is Natural killer cells antigen CD94 (179 aa).

Over 1 to 10 the chain is Cytoplasmic; sequence MAVFKTTLWR. Residues 11–31 traverse the membrane as a helical; Signal-anchor for type II membrane protein segment; it reads LISGTLGIICLSLMATLGILL. The Extracellular portion of the chain corresponds to 32-179; the sequence is KNSFTKLSVE…NRYICKQQLI (148 aa). 2 cysteine pairs are disulfide-bonded: Cys-58/Cys-70 and Cys-61/Cys-72. The C-type lectin domain maps to 68–175; sequence YRCNCYFISS…CETKNRYICK (108 aa). N-linked (GlcNAc...) asparagine glycans are attached at residues Asn-83 and Asn-132. Cystine bridges form between Cys-89–Cys-174 and Cys-152–Cys-166.

In terms of assembly, can form disulfide-bonded heterodimer with NKG2 family members KLRC1 and KLRC2. KLRD1-KLRC1 heterodimer interacts with peptide-bound MHC-E-B2M heterotrimeric complex. KLRD1 plays a prominent role in directly interacting with MHC-E. KLRD1-KLRC1 interacts with much higher affinity with peptide-bound MHC-E-B2M than KLRD1-KLRC2. Interacts with the adapter protein TYROBP/DAP12; this interaction is required for cell surface expression and cell activation. As to expression, natural killer cells.

It localises to the cell membrane. Immune receptor involved in self-nonself discrimination. In complex with KLRC1 or KLRC2 on cytotoxic and regulatory lymphocyte subsets, recognizes non-classical major histocompatibility (MHC) class Ib molecule MHC-E loaded with self-peptides derived from the signal sequence of classical MHC class Ia and non-classical MHC class Ib molecules. Enables cytotoxic cells to monitor the expression of MHC class I molecules in healthy cells and to tolerate self. Primarily functions as a ligand binding subunit as it lacks the capacity to signal. In terms of biological role, KLRD1-KLRC1 acts as an immune inhibitory receptor. Key inhibitory receptor on natural killer (NK) cells that regulates their activation and effector functions. Dominantly counteracts T cell receptor signaling on a subset of memory/effector CD8-positive T cells as part of an antigen-driven response to avoid autoimmunity. On intraepithelial CD8-positive gamma-delta regulatory T cells triggers TGFB1 secretion, which in turn limits the cytotoxic programming of intraepithelial CD8-positive alpha-beta T cells, distinguishing harmless from pathogenic antigens. In MHC-E-rich tumor microenvironment, acts as an immune inhibitory checkpoint and may contribute to progressive loss of effector functions of NK cells and tumor-specific T cells, a state known as cell exhaustion. Upon MHC-E-peptide binding, transmits intracellular signals through KLRC1 immunoreceptor tyrosine-based inhibition motifs (ITIMs) by recruiting INPP5D/SHIP-1 and INPPL1/SHIP-2 tyrosine phosphatases to ITIMs, and ultimately opposing signals transmitted by activating receptors through dephosphorylation of proximal signaling molecules. Its function is as follows. KLRD1-KLRC2 acts as an immune activating receptor. On cytotoxic lymphocyte subsets recognizes MHC-E loaded with signal sequence-derived peptides from non-classical MHC class Ib MHC-G molecules, likely playing a role in the generation and effector functions of adaptive NK cells and in maternal-fetal tolerance during pregnancy. Regulates the effector functions of terminally differentiated cytotoxic lymphocyte subsets, and in particular may play a role in adaptive NK cell response to viral infection. Upon MHC-E-peptide binding, transmits intracellular signals via the adapter protein TYROBP/DAP12, triggering the phosphorylation of proximal signaling molecules and cell activation. This is Natural killer cells antigen CD94 (KLRD1) from Macaca mulatta (Rhesus macaque).